A 642-amino-acid chain; its full sequence is 5-aminolevulinate synthase, non-specific, mitochondrial (642 aa).

The transit peptide at 1–56 (METVVRRCPFLSRVPQAFLQKAGKSLLFYAQNCPKMMEVGAKPAPRTVSTSAAQCQ) directs the protein to the mitochondrion. Residues 51 to 109 (SAAQCQQVKETPPANEKEKTAKAAVQQAPDESQMAQTPDGTQLPPGHPSPSTSQSSGSK) are disordered. Positions 79–90 (PDESQMAQTPDG) are enriched in polar residues. Over residues 99 to 108 (SPSTSQSSGS) the composition is skewed to low complexity. Substrate contacts are provided by Arg219, Ser336, and Lys355. Residues Ser388, His416, and Thr444 each coordinate pyridoxal 5'-phosphate. Lys447 is a catalytic residue. An N6-(pyridoxal phosphate)lysine modification is found at Lys447. Pyridoxal 5'-phosphate contacts are provided by Thr476 and Thr477. Thr564 contributes to the substrate binding site. A Hydroxyproline modification is found at Pro578.

This sequence belongs to the class-II pyridoxal-phosphate-dependent aminotransferase family. In terms of assembly, homodimer. Interacts (hydroxylated form) with VHL. The cofactor is pyridoxal 5'-phosphate. In normoxia, is hydroxylated at Pro-578, promoting interaction with VHL, initiating ubiquitination and subsequent degradation via the proteasome. Post-translationally, ubiquitinated; in normoxia following hydroxylation and interaction with VHL, leading to its subsequent degradation via the proteasome. Expressed in the liver, kidney, brain and testis.

It is found in the mitochondrion inner membrane. The catalysed reaction is succinyl-CoA + glycine + H(+) = 5-aminolevulinate + CO2 + CoA. Its pathway is porphyrin-containing compound metabolism; protoporphyrin-IX biosynthesis; 5-aminolevulinate from glycine: step 1/1. Catalyzes the pyridoxal 5'-phosphate (PLP)-dependent condensation of succinyl-CoA and glycine to form aminolevulinic acid (ALA), with CoA and CO2 as by-products. This chain is 5-aminolevulinate synthase, non-specific, mitochondrial (Alas1), found in Rattus norvegicus (Rat).